Here is a 407-residue protein sequence, read N- to C-terminus: 1-deoxy-D-xylulose 5-phosphate reductoisomerase (407 aa).

NADPH contacts are provided by threonine 25, glycine 26, serine 27, isoleucine 28, asparagine 53, and asparagine 136. Residue lysine 137 coordinates 1-deoxy-D-xylulose 5-phosphate. Residue glutamate 138 participates in NADPH binding. Mn(2+) is bound at residue aspartate 162. 4 residues coordinate 1-deoxy-D-xylulose 5-phosphate: serine 163, glutamate 164, serine 188, and histidine 211. Glutamate 164 is a binding site for Mn(2+). Glycine 217 contributes to the NADPH binding site. Positions 224, 229, 230, and 233 each coordinate 1-deoxy-D-xylulose 5-phosphate. Glutamate 233 provides a ligand contact to Mn(2+).

It belongs to the DXR family. The cofactor is Mg(2+). Mn(2+) serves as cofactor.

It catalyses the reaction 2-C-methyl-D-erythritol 4-phosphate + NADP(+) = 1-deoxy-D-xylulose 5-phosphate + NADPH + H(+). It functions in the pathway isoprenoid biosynthesis; isopentenyl diphosphate biosynthesis via DXP pathway; isopentenyl diphosphate from 1-deoxy-D-xylulose 5-phosphate: step 1/6. In terms of biological role, catalyzes the NADPH-dependent rearrangement and reduction of 1-deoxy-D-xylulose-5-phosphate (DXP) to 2-C-methyl-D-erythritol 4-phosphate (MEP). This Nitrobacter winogradskyi (strain ATCC 25391 / DSM 10237 / CIP 104748 / NCIMB 11846 / Nb-255) protein is 1-deoxy-D-xylulose 5-phosphate reductoisomerase.